A 362-amino-acid polypeptide reads, in one-letter code: Class I histocompatibility antigen, Gogo-B*0102 alpha chain (362 aa).

The N-terminal stretch at 1 to 24 (MRVTAPRTLLLLLSAALALTETWA) is a signal peptide. An alpha-1 region spans residues 25–114 (GSHSMRYFDT…ALRYYNQSEA (90 aa)). The Extracellular portion of the chain corresponds to 25–308 (GSHSMRYFDT…EPSSQSTIPI (284 aa)). Asn110 carries N-linked (GlcNAc...) asparagine glycosylation. The tract at residues 115–206 (GSHTFQRMFG…ENGRETLQRA (92 aa)) is alpha-2. Disulfide bonds link Cys125-Cys188 and Cys227-Cys283. The interval 207 to 298 (DTPKTHVTHH…GLPKPLTLRW (92 aa)) is alpha-3. The Ig-like C1-type domain occupies 209 to 295 (PKTHVTHHPI…QHEGLPKPLT (87 aa)). Residues 299 to 308 (EPSSQSTIPI) are connecting peptide. A helical transmembrane segment spans residues 309–332 (VGIVAGLAVLAVVVIGAVVTAVIC). The Cytoplasmic portion of the chain corresponds to 333-362 (RRKSSGGKGGSYSQAASSDSAQGSDVSLTA). Residues 335 to 362 (KSSGGKGGSYSQAASSDSAQGSDVSLTA) form a disordered region. The span at 343–362 (SYSQAASSDSAQGSDVSLTA) shows a compositional bias: low complexity.

This sequence belongs to the MHC class I family. In terms of assembly, heterodimer of an alpha chain and a beta chain (beta-2-microglobulin).

The protein resides in the membrane. In terms of biological role, involved in the presentation of foreign antigens to the immune system. The protein is Class I histocompatibility antigen, Gogo-B*0102 alpha chain of Gorilla gorilla gorilla (Western lowland gorilla).